The following is a 363-amino-acid chain: Alanine racemase (363 aa).

Residue lysine 39 is the Proton acceptor; specific for D-alanine of the active site. At lysine 39 the chain carries N6-(pyridoxal phosphate)lysine. Arginine 134 contributes to the substrate binding site. Residue tyrosine 251 is the Proton acceptor; specific for L-alanine of the active site. Methionine 299 contacts substrate.

It belongs to the alanine racemase family. Pyridoxal 5'-phosphate serves as cofactor.

The enzyme catalyses L-alanine = D-alanine. It functions in the pathway amino-acid biosynthesis; D-alanine biosynthesis; D-alanine from L-alanine: step 1/1. Functionally, catalyzes the interconversion of L-alanine and D-alanine. May also act on other amino acids. This Thermodesulfovibrio yellowstonii (strain ATCC 51303 / DSM 11347 / YP87) protein is Alanine racemase (alr).